A 406-amino-acid chain; its full sequence is Tryptophan 2,3-dioxygenase A (406 aa).

Residues 71–75 and R143 contribute to the substrate site; that span reads FIVTH. H327 lines the heme pocket. T341 provides a ligand contact to substrate.

Belongs to the tryptophan 2,3-dioxygenase family. Homotetramer. Dimer of dimers. Heme is required as a cofactor.

It catalyses the reaction L-tryptophan + O2 = N-formyl-L-kynurenine. It participates in amino-acid degradation; L-tryptophan degradation via kynurenine pathway; L-kynurenine from L-tryptophan: step 1/2. In terms of biological role, heme-dependent dioxygenase that catalyzes the oxidative cleavage of the L-tryptophan (L-Trp) pyrrole ring and converts L-tryptophan to N-formyl-L-kynurenine. Catalyzes the oxidative cleavage of the indole moiety. The chain is Tryptophan 2,3-dioxygenase A from Danio rerio (Zebrafish).